The following is a 98-amino-acid chain: uncharacterized protein (98 aa).

Transmembrane regions (helical) follow at residues 13-33 (LFSLAINEPSPTFALTIIAIF) and 65-85 (IMVIISYLKYVNLPCSFIFIS).

The protein resides in the membrane. This is an uncharacterized protein from Saccharomyces cerevisiae (strain ATCC 204508 / S288c) (Baker's yeast).